We begin with the raw amino-acid sequence, 629 residues long: tRNA uridine 5-carboxymethylaminomethyl modification enzyme MnmG (629 aa).

An FAD-binding site is contributed by 13 to 18 (GGGHAG). 273 to 287 (GPRYCPSIEDKITRF) provides a ligand contact to NAD(+).

This sequence belongs to the MnmG family. In terms of assembly, homodimer. Heterotetramer of two MnmE and two MnmG subunits. Requires FAD as cofactor.

It is found in the cytoplasm. In terms of biological role, NAD-binding protein involved in the addition of a carboxymethylaminomethyl (cmnm) group at the wobble position (U34) of certain tRNAs, forming tRNA-cmnm(5)s(2)U34. The protein is tRNA uridine 5-carboxymethylaminomethyl modification enzyme MnmG of Aeromonas salmonicida (strain A449).